Reading from the N-terminus, the 122-residue chain is Small ribosomal subunit protein uS13 (122 aa).

A disordered region spans residues 93 to 122 (RRGLPVRGQKTKTNARTRKGPKKTMANKKK).

The protein belongs to the universal ribosomal protein uS13 family. Part of the 30S ribosomal subunit. Forms a loose heterodimer with protein S19. Forms two bridges to the 50S subunit in the 70S ribosome.

Functionally, located at the top of the head of the 30S subunit, it contacts several helices of the 16S rRNA. In the 70S ribosome it contacts the 23S rRNA (bridge B1a) and protein L5 of the 50S subunit (bridge B1b), connecting the 2 subunits; these bridges are implicated in subunit movement. Contacts the tRNAs in the A and P-sites. The polypeptide is Small ribosomal subunit protein uS13 (Clostridium botulinum (strain Alaska E43 / Type E3)).